The primary structure comprises 925 residues: GPI ethanolamine phosphate transferase 1 (925 aa).

The Cytoplasmic portion of the chain corresponds to 1–6; the sequence is MWNKHR. Residues 7-27 form a helical membrane-spanning segment; it reads LAFILVGLLFHLFYLRSIFDI. At 28–457 the chain is on the lumenal side; the sequence is YFVSPLVHGM…TTYNWRFIRS (430 aa). N-linked (GlcNAc...) asparagine glycans are attached at residues Asn90, Asn138, Asn198, Asn286, Asn312, and Asn358. Residues 458–478 form a helical membrane-spanning segment; that stretch reads IVTLGFIGWITYSFTIFLRLF. Residues 479-492 are Cytoplasmic-facing; sequence ILEKQYAMKTSPQN. Residues 493–510 form a helical membrane-spanning segment; it reads LASFGALTAALNYVLYYQ. Residues 511 to 516 are Lumenal-facing; it reads RSPFNY. Residues 517 to 537 form a helical membrane-spanning segment; it reads YMYLLFPLFFWSQILTNSTIL. Topologically, residues 538–547 are cytoplasmic; it reads HDGIREMFKG. Residues 548–568 form a helical membrane-spanning segment; that stretch reads VSMLQRIGICALIVSIYEGIV. Residues 569–574 lie on the Lumenal side of the membrane; it reads YGYFDR. Residues 575–595 traverse the membrane as a helical segment; that stretch reads WIFTIIFNLLALYPFFCGIKD. The Cytoplasmic segment spans residues 596 to 599; the sequence is AKTN. Residues 600–620 form a helical membrane-spanning segment; it reads MFWGANSMALSIFTLFDAVKI. A topological domain (lumenal) is located at residue Glu621. Residues 622–642 traverse the membrane as a helical segment; it reads SLTQINVSGLLLVASGLYALW. Residues 643–653 are Cytoplasmic-facing; sequence RVSKKINSHTK. A helical transmembrane segment spans residues 654–674; sequence IVILLQILLLAMMLAVTNKSV. Topologically, residues 675–687 are lumenal; the sequence is TSLQQRAGLPTDA. The chain crosses the membrane as a helical span at residues 688–708; sequence KIAGWVILTLSLSLMPLLHYL. Residues 709–719 are Cytoplasmic-facing; the sequence is KPSNDYQVRVL. The helical transmembrane segment at 720-740 threads the bilayer; it reads VIYLTFAPTFLILTISFESFF. Residues 741–775 are Lumenal-facing; that stretch reads YLLFTNYLMLWIEIESKIKAQNIAKNSQNWLQLLR. A helical transmembrane segment spans residues 776 to 796; sequence ISIIGFFLLQFAFFGTGNVAS. At 797–818 the chain is on the cytoplasmic side; the sequence is ISSFSLDSVYRLMPVFDPFPMG. A helical transmembrane segment spans residues 819-839; the sequence is ALLILKIMIPYILLSTALGIM. At 840–848 the chain is on the lumenal side; the sequence is NLKLNIKDY. The helical transmembrane segment at 849–869 threads the bilayer; the sequence is TVSSLILSTSDVLSLNFFYLL. Over 870-885 the chain is Cytoplasmic; that stretch reads RTEGSWLDIGVTISNY. Residues 886-906 traverse the membrane as a helical segment; that stretch reads CLAILSSLFMIVLELFSHFLL. The Lumenal segment spans residues 907–925; the sequence is KNVRDNGMDIAASKQQKRH.

Belongs to the PIGG/PIGN/PIGO family. PIGN subfamily.

It is found in the endoplasmic reticulum membrane. The protein operates within glycolipid biosynthesis; glycosylphosphatidylinositol-anchor biosynthesis. In terms of biological role, ethanolamine phosphate transferase involved in glycosylphosphatidylinositol-anchor biosynthesis. Transfers ethanolamine phosphate to the first alpha-1,4-linked mannose of the glycosylphosphatidylinositol precursor of GPI-anchor. The protein is GPI ethanolamine phosphate transferase 1 (MCD4) of Eremothecium gossypii (strain ATCC 10895 / CBS 109.51 / FGSC 9923 / NRRL Y-1056) (Yeast).